Here is a 450-residue protein sequence, read N- to C-terminus: Keratin, type I cytoskeletal 25 (450 aa).

The segment at 1 to 24 (MSLRLPSGSRRAGPRPTTGSLRLS) is disordered. The head stretch occupies residues 1–78 (MSLRLPSGSR…MNEGGLLSGN (78 aa)). The coil 1A stretch occupies residues 79 to 114 (EKVTMQNLNDRLASYLENVRALEEANADLEQKIKGW). The 316-residue stretch at 79–394 (EKVTMQNLND…LLIGGDDGAC (316 aa)) folds into the IF rod domain. A linker 1 region spans residues 115–136 (YEKFGPGSCRGLDHDYSRYLPI). The interval 137–228 (IEDLKNQIIA…KNHKEEMQVL (92 aa)) is coil 1B. The tract at residues 229 to 251 (QCAAGGNVNVEMNAAPGVDLTVL) is linker 12. The segment at 252–390 (LNNMRAEYEA…ETYCLLIGGD (139 aa)) is coil 2. The tract at residues 391 to 450 (DGACKSGGYKSKDYAAGNMGNQMKDPIRAIVVKKVLEEVDQRSKVLTTRLHSLEEKSQSN) is tail. Ser442 is modified (phosphoserine).

The protein belongs to the intermediate filament family. In terms of assembly, heterodimer of a type I and a type II keratin. Heterodimer with type II keratin KRT5 leading to the formation of keratin intermediate filament (KIF) network. Interacts with KRT6A to form filaments. As to expression, expressed in skin and wool follicle. Expression localized to the inner root sheath of wool follicle.

The protein resides in the cytoplasm. Its function is as follows. Essential for the proper assembly of type I and type II keratin protein complexes and formation of keratin intermediate filaments in the inner root sheath (irs). Plays a role in the cytoskeleton organization. This is Keratin, type I cytoskeletal 25 from Ovis aries (Sheep).